The following is a 28-amino-acid chain: Endoglucanase (28 aa).

Glutamate 20 functions as the Nucleophile in the catalytic mechanism.

Belongs to the glycosyl hydrolase 5 (cellulase A) family.

Its subcellular location is the cell membrane. It catalyses the reaction Endohydrolysis of (1-&gt;4)-beta-D-glucosidic linkages in cellulose, lichenin and cereal beta-D-glucans.. This Schizophyllum commune (Split gill fungus) protein is Endoglucanase.